Consider the following 302-residue polypeptide: Snake venom metalloprotease inhibitor 02A10 (302 aa).

Residues 1-23 form the signal peptide; sequence MSVSRLAASGLLLVSLLALALDG. A propeptide spanning residues 24–47 is cleaved from the precursor; that stretch reads KPVEKWSPWLWPPRPRPPIPPLQQ. The disordered stretch occupies residues 32–302; it reads WLWPPRPRPP…CPKLPPSGGH (271 aa). Over residues 33–44 the composition is skewed to pro residues; the sequence is LWPPRPRPPIPP. Q48 bears the Pyrrolidone carboxylic acid mark. The propeptide occupies 51 to 58; that stretch reads LDPPIPQQ. A Pyrrolidone carboxylic acid modification is found at Q59. Positions 62 to 69 are excised as a propeptide; it reads LDPPIPQQ. Q70 bears the Pyrrolidone carboxylic acid mark. The propeptide occupies 73–80; sequence LDPPIPQQ. Q81 carries the post-translational modification Pyrrolidone carboxylic acid. Positions 84–91 are excised as a propeptide; sequence LNPPIPQQ. Residue Q92 is modified to Pyrrolidone carboxylic acid. A propeptide spanning residues 95 to 102 is cleaved from the precursor; that stretch reads LDPPIPQQ. Pyrrolidone carboxylic acid is present on Q103. A propeptide spanning residues 106–113 is cleaved from the precursor; it reads LNPPIPQQ. Residue Q114 is modified to Pyrrolidone carboxylic acid. A propeptide spanning residues 117-124 is cleaved from the precursor; it reads LNPPIPQQ. At Q125 the chain carries Pyrrolidone carboxylic acid. Residues 128-135 constitute a propeptide that is removed on maturation; the sequence is LNPPIPQQ. Q136 is modified (pyrrolidone carboxylic acid). A propeptide spanning residues 139–146 is cleaved from the precursor; it reads LNPPIPQQ. Q147 is subject to Pyrrolidone carboxylic acid. Positions 150 to 157 are excised as a propeptide; that stretch reads LDPPIPQQ. Q158 is subject to Pyrrolidone carboxylic acid. Residues 161–168 constitute a propeptide that is removed on maturation; it reads LDPPIPQQ. The residue at position 169 (Q169) is a Pyrrolidone carboxylic acid. Positions 172–179 are excised as a propeptide; the sequence is LDPPIPQQ. Q180 carries the post-translational modification Pyrrolidone carboxylic acid. The propeptide occupies 183–190; the sequence is LNPPIPQQ. Q191 carries the post-translational modification Pyrrolidone carboxylic acid. Positions 194-201 are excised as a propeptide; the sequence is LDPPIPQQ. At Q202 the chain carries Pyrrolidone carboxylic acid. The propeptide occupies 205-212; the sequence is LDPPIPQQ. Position 213 is a pyrrolidone carboxylic acid (Q213). The propeptide occupies 216-223; the sequence is LNPPIPQQ. Residue Q224 is modified to Pyrrolidone carboxylic acid. Residues 227-273 constitute a propeptide that is removed on maturation; sequence QRPLQPEVPSLMELHQERQKQGRMMHHDEDPGDAAEGPRRQKKEPGK. Basic and acidic residues-rich tracts occupy residues 240-255 and 262-273; these read LHQE…HHDE and EGPRRQKKEPGK. A disulfide bridge links C279 with C293. The propeptide occupies 294–302; the sequence is PKLPPSGGH.

It in the C-terminal section; belongs to the natriuretic peptide family. As to expression, expressed by the venom gland.

Its subcellular location is the secreted. Its function is as follows. pEKW peptides may serve as metalloproteinase inhibitors during glandular storage. Their inhibition may be instantly disengaged, by dilution or physiochemical change, when venom is injected into tissue of the victim. Functionally, exhibits hypotensive and vasodepressor activity. Acts by activating natriuretic receptors (NPR1 and/or NPR2 and/or NPR3). This Cerastes cerastes (Horned desert viper) protein is Snake venom metalloprotease inhibitor 02A10 (Svmpi-Cce12).